The following is a 416-amino-acid chain: Lipid phosphate phosphatase delta (416 aa).

2 consecutive transmembrane segments (helical) span residues 72 to 92 and 104 to 124; these read FFSG…LPLL and MTLL…VVSA. The interval 119–127 is phosphatase sequence motif I; that stretch reads KDVVSAPRP. The tract at residues 151-154 is phosphatase sequence motif II; the sequence is PSSH. The active-site Proton donor is the His-154. Residues 178–198 traverse the membrane as a helical segment; it reads VSIQYYGFALACLLVALIAFG. Residues 198–209 form a phosphatase sequence motif III region; sequence GRVYLGMHSVVD. The active-site Nucleophile is the His-205. The next 5 helical transmembrane spans lie at 207 to 227, 241 to 261, 266 to 286, 302 to 322, and 393 to 413; these read VVDI…WLTV, VSSF…TPEH, YEYH…VQQT, ELPI…ILLV, and FFQY…LFSY.

The protein belongs to the type 2 lipid phosphate phosphatase family.

The protein localises to the endoplasmic reticulum membrane. Its function is as follows. Functions as a sphingoid long-chain base phosphate (LCBP) phosphatase. May play a role in the regulation of LCBP levels and be involved in stomatal responses through LCBP-mediated ABA signaling. This chain is Lipid phosphate phosphatase delta (LPPD), found in Arabidopsis thaliana (Mouse-ear cress).